A 257-amino-acid polypeptide reads, in one-letter code: Taurine import ATP-binding protein TauB (257 aa).

The ABC transporter domain occupies 6-233 (LDKISIHYDG…RYAAGEPIRA (228 aa)). Residue 38–45 (GRSGCGKT) coordinates ATP.

The protein belongs to the ABC transporter superfamily. Taurine importer (TC 3.A.1.17.1) family. As to quaternary structure, the complex is composed of two ATP-binding proteins (TauB), two transmembrane proteins (TauC) and a solute-binding protein (TauA).

It localises to the cell inner membrane. It carries out the reaction taurine(out) + ATP + H2O = taurine(in) + ADP + phosphate + H(+). Part of the ABC transporter complex TauABC involved in taurine import. Responsible for energy coupling to the transport system. In Mesorhizobium japonicum (strain LMG 29417 / CECT 9101 / MAFF 303099) (Mesorhizobium loti (strain MAFF 303099)), this protein is Taurine import ATP-binding protein TauB.